The following is a 136-amino-acid chain: MEPWVQLKQAGLEPSGLGPLPKALRVPPPEGNPGQALMSSGAELGGARELILWIWEELGNLRRVDVQLLGQLCDLGLEMGTFREELVTILEEEEEEEEQEEKSCVEENKGPEEKQDEERSRSSYPAQRLPDFGMTI.

Positions 92–136 (EEEEEEEQEEKSCVEENKGPEEKQDEERSRSSYPAQRLPDFGMTI) are disordered. The segment covering 101–121 (EKSCVEENKGPEEKQDEERSR) has biased composition (basic and acidic residues).

This Mus musculus (Mouse) protein is Glutamate-rich protein 4 (Erich4).